Reading from the N-terminus, the 1396-residue chain is DNA-directed RNA polymerase subunit beta (1396 aa).

It belongs to the RNA polymerase beta chain family. In terms of assembly, the RNAP catalytic core consists of 2 alpha, 1 beta, 1 beta' and 1 omega subunit. When a sigma factor is associated with the core the holoenzyme is formed, which can initiate transcription.

It catalyses the reaction RNA(n) + a ribonucleoside 5'-triphosphate = RNA(n+1) + diphosphate. In terms of biological role, DNA-dependent RNA polymerase catalyzes the transcription of DNA into RNA using the four ribonucleoside triphosphates as substrates. This Erythrobacter litoralis (strain HTCC2594) protein is DNA-directed RNA polymerase subunit beta.